We begin with the raw amino-acid sequence, 90 residues long: uncharacterized protein (90 aa).

This is an uncharacterized protein from Clostridium acetobutylicum (strain ATCC 824 / DSM 792 / JCM 1419 / IAM 19013 / LMG 5710 / NBRC 13948 / NRRL B-527 / VKM B-1787 / 2291 / W).